We begin with the raw amino-acid sequence, 425 residues long: Serine hydroxymethyltransferase (425 aa).

(6S)-5,6,7,8-tetrahydrofolate is bound by residues leucine 120 and 124 to 126 (GHL). Position 229 is an N6-(pyridoxal phosphate)lysine (lysine 229). 353-355 (SPF) provides a ligand contact to (6S)-5,6,7,8-tetrahydrofolate.

Belongs to the SHMT family. Homodimer. Pyridoxal 5'-phosphate serves as cofactor.

It is found in the cytoplasm. The enzyme catalyses (6R)-5,10-methylene-5,6,7,8-tetrahydrofolate + glycine + H2O = (6S)-5,6,7,8-tetrahydrofolate + L-serine. It functions in the pathway one-carbon metabolism; tetrahydrofolate interconversion. Its pathway is amino-acid biosynthesis; glycine biosynthesis; glycine from L-serine: step 1/1. Its function is as follows. Catalyzes the reversible interconversion of serine and glycine with tetrahydrofolate (THF) serving as the one-carbon carrier. This reaction serves as the major source of one-carbon groups required for the biosynthesis of purines, thymidylate, methionine, and other important biomolecules. Also exhibits THF-independent aldolase activity toward beta-hydroxyamino acids, producing glycine and aldehydes, via a retro-aldol mechanism. This is Serine hydroxymethyltransferase from Thermosynechococcus vestitus (strain NIES-2133 / IAM M-273 / BP-1).